A 61-amino-acid chain; its full sequence is Large ribosomal subunit protein bL32 (61 aa).

The span at 1-16 shows a compositional bias: basic residues; that stretch reads MAVPKRKTSPSKRGMR. Residues 1-33 are disordered; that stretch reads MAVPKRKTSPSKRGMRRSADGLKAPTYVEDKNS.

It belongs to the bacterial ribosomal protein bL32 family.

The protein is Large ribosomal subunit protein bL32 of Allorhizobium ampelinum (strain ATCC BAA-846 / DSM 112012 / S4) (Agrobacterium vitis (strain S4)).